The primary structure comprises 457 residues: tRNA-2-methylthio-N(6)-dimethylallyladenosine synthase (457 aa).

The MTTase N-terminal domain occupies 18–133 (KKLFIETYGC…LPELIASVEA (116 aa)). Positions 27, 63, 97, 171, 175, and 178 each coordinate [4Fe-4S] cluster. One can recognise a Radical SAM core domain in the interval 157–390 (CGNHISGFVS…IALQNRLSAE (234 aa)). A TRAM domain is found at 393–456 (NRCIGKTYEV…SATLKGEEVF (64 aa)).

Belongs to the methylthiotransferase family. MiaB subfamily. Monomer. It depends on [4Fe-4S] cluster as a cofactor.

The protein resides in the cytoplasm. The enzyme catalyses N(6)-dimethylallyladenosine(37) in tRNA + (sulfur carrier)-SH + AH2 + 2 S-adenosyl-L-methionine = 2-methylsulfanyl-N(6)-dimethylallyladenosine(37) in tRNA + (sulfur carrier)-H + 5'-deoxyadenosine + L-methionine + A + S-adenosyl-L-homocysteine + 2 H(+). Functionally, catalyzes the methylthiolation of N6-(dimethylallyl)adenosine (i(6)A), leading to the formation of 2-methylthio-N6-(dimethylallyl)adenosine (ms(2)i(6)A) at position 37 in tRNAs that read codons beginning with uridine. This chain is tRNA-2-methylthio-N(6)-dimethylallyladenosine synthase, found in Bacteroides fragilis (strain ATCC 25285 / DSM 2151 / CCUG 4856 / JCM 11019 / LMG 10263 / NCTC 9343 / Onslow / VPI 2553 / EN-2).